The chain runs to 714 residues: Protein artemis (714 aa).

4 disordered regions span residues 391-500, 516-577, 598-617, and 638-683; these read ELFD…ESNA, ESSE…TVLI, ALLSHDTPRDSQADDSRWKL, and EKDA…LTPD. The span at 427-440 shows a compositional bias: polar residues; it reads NESTESYRANTAYT. The span at 447–468 shows a compositional bias: acidic residues; it reads VDCEESNDDDDDDDDDDKEDDS. 2 stretches are compositionally biased toward polar residues: residues 484–500 and 532–543; these read SIASCNGIPSNQQESNA and GSQSLFSDSDGV. The segment covering 544–561 has biased composition (low complexity); it reads SDSTHISSQNSSQSTHIS. Positions 562–577 are enriched in polar residues; that stretch reads EQGSQGWDSQMDTVLI. 2 stretches are compositionally biased toward basic and acidic residues: residues 603–615 and 660–670; these read DTPRDSQADDSRW and RTPDLELKRDS. Residue Ser670 is modified to Phosphoserine; by ATM.

It belongs to the DNA repair metallo-beta-lactamase (DRMBL) family. In terms of assembly, interacts with PRKDC. In terms of processing, phosphorylation on undefined residues by PRKDC may stimulate endonucleolytic activity on 5' and 3' hairpins and overhangs. PRKDC must remain present, even after phosphorylation, for efficient hairpin opening.

The protein resides in the nucleus. Functionally, required for V(D)J recombination, the process by which exons encoding the antigen-binding domains of immunoglobulins and T-cell receptor proteins are assembled from individual V, (D), and J gene segments. V(D)J recombination is initiated by the lymphoid specific RAG endonuclease complex, which generates site specific DNA double strand breaks (DSBs). These DSBs present two types of DNA end structures: hairpin sealed coding ends and phosphorylated blunt signal ends. These ends are independently repaired by the non homologous end joining (NHEJ) pathway to form coding and signal joints respectively. This protein exhibits single-strand specific 5'-3' exonuclease activity in isolation, and acquires endonucleolytic activity on 5' and 3' hairpins and overhangs when in a complex with PRKDC. The latter activity is required specifically for the resolution of closed hairpins prior to the formation of the coding joint. May also be required for the repair of complex DSBs induced by ionizing radiation, which require substantial end-processing prior to religation by NHEJ. The chain is Protein artemis (DCLRE1C) from Gallus gallus (Chicken).